The chain runs to 342 residues: Oxygen-dependent coproporphyrinogen-III oxidase (342 aa).

Position 98 (Ser-98) interacts with substrate. His-102 and His-112 together coordinate a divalent metal cation. His-112 serves as the catalytic Proton donor. Residue 114–116 (NYR) participates in substrate binding. The a divalent metal cation site is built by His-146 and His-176. An important for dimerization region spans residues 266–301 (YVEFNLVWDRGTIFGLQTNGRTESILMSLPPLARWE).

This sequence belongs to the aerobic coproporphyrinogen-III oxidase family. As to quaternary structure, homodimer. Requires a divalent metal cation as cofactor.

The protein resides in the cytoplasm. The enzyme catalyses coproporphyrinogen III + O2 + 2 H(+) = protoporphyrinogen IX + 2 CO2 + 2 H2O. It functions in the pathway porphyrin-containing compound metabolism; protoporphyrin-IX biosynthesis; protoporphyrinogen-IX from coproporphyrinogen-III (O2 route): step 1/1. In terms of biological role, involved in the heme and chlorophyll biosynthesis. Catalyzes the aerobic oxidative decarboxylation of propionate groups of rings A and B of coproporphyrinogen-III to yield the vinyl groups in protoporphyrinogen-IX. The sequence is that of Oxygen-dependent coproporphyrinogen-III oxidase from Prochlorococcus marinus (strain MIT 9515).